Reading from the N-terminus, the 216-residue chain is Elongation factor Ts (216 aa).

An involved in Mg(2+) ion dislocation from EF-Tu region spans residues 81–84 (TDFV).

Belongs to the EF-Ts family.

Its subcellular location is the cytoplasm. Associates with the EF-Tu.GDP complex and induces the exchange of GDP to GTP. It remains bound to the aminoacyl-tRNA.EF-Tu.GTP complex up to the GTP hydrolysis stage on the ribosome. The sequence is that of Elongation factor Ts from Citrifermentans bemidjiense (strain ATCC BAA-1014 / DSM 16622 / JCM 12645 / Bem) (Geobacter bemidjiensis).